Consider the following 110-residue polypeptide: Insulin (110 aa).

The N-terminal stretch at 1 to 24 (MALWTRLLPLLALLALLGPDPAQA) is a signal peptide. Disulfide bonds link C31-C96, C43-C109, and C95-C100. Positions 57–87 (EVEEQQGGQVELGGGPGAGLPQPLALEMALQ) are cleaved as a propeptide — c peptide.

Belongs to the insulin family. In terms of assembly, heterodimer of a B chain and an A chain linked by two disulfide bonds.

Its subcellular location is the secreted. In terms of biological role, insulin decreases blood glucose concentration. It increases cell permeability to monosaccharides, amino acids and fatty acids. It accelerates glycolysis, the pentose phosphate cycle, and glycogen synthesis in liver. This Ictidomys tridecemlineatus (Thirteen-lined ground squirrel) protein is Insulin (INS).